A 395-amino-acid chain; its full sequence is Allantoicase (395 aa).

It belongs to the allantoicase family.

It catalyses the reaction allantoate + H2O = (S)-ureidoglycolate + urea. It participates in nitrogen metabolism; (S)-allantoin degradation; (S)-ureidoglycolate from allantoate (aminidohydrolase route): step 1/1. Its function is as follows. Utilization of purines as secondary nitrogen sources, when primary sources are limiting. This is Allantoicase (allc) from Danio rerio (Zebrafish).